We begin with the raw amino-acid sequence, 250 residues long: MGACRIQYILLVFLLIASHWTLVQNIYCEVSRTLSLEDNPSGTFNWTSKAEKCNPGEFCQETVLLIKAEGTKTAILASKSCVPQGAETMTFVQYTAPPGLVAISYSNYCNDSLCNNRNNLASILQAPEPTATSNMSGARHCPTCLALEPCSSAPSMPCANGTTQCYHGKIELSGGGMDSVVHVKGCTTAIGCRLMAKMESVGPMTVKETCSYQSFLHPRMAEIGASWMPTSLWVLELLLPALSLPLIYFP.

The signal sequence occupies residues 1–25; the sequence is MGACRIQYILLVFLLIASHWTLVQN. N-linked (GlcNAc...) asparagine glycosylation is found at N45, N110, N134, and N160. The region spanning 141–215 is the UPAR/Ly6 domain; the sequence is CPTCLALEPC…VKETCSYQSF (75 aa). G224 is lipidated: GPI-anchor amidated glycine. A propeptide spans 225–250 (removed in mature form); that stretch reads ASWMPTSLWVLELLLPALSLPLIYFP.

Interacts with VAMP3. Interacts with LY6K. Interacts with DPEP3; co-localized on the cell surface of spermatocytes, spermatids, and testicular spermatozoa, co-localized only in cytoplasmic droplets of caput and corpus epididymal sperm. Interacts with ADAM5. Post-translationally, N-glycosylated; by high mannose and/or biantennary complex and/or certain types of hybrid oligosaccharides; possesses different oligosaccharides chains according to its subcellular localization in the testis. In terms of processing, sheds from membrane raft by ACE and released from the cell surface of epididymal sperm while it passes through the caput epididymis leading to disappearance of TEX101 on spermatozoa; is essential to produce fertile spermatozoa. As to expression, detected in testis.

The protein localises to the cell membrane. It is found in the membrane raft. Its subcellular location is the cytoplasmic vesicle. The protein resides in the secretory vesicle. It localises to the acrosome. The protein localises to the secreted. Its function is as follows. Plays a role in fertilization by controlling binding of sperm to zona pellucida and migration of spermatozoa into the oviduct. May play a role in signal transduction and promote protein tyrosine phosphorylation. This is Testis-expressed protein 101 from Rattus norvegicus (Rat).